A 348-amino-acid polypeptide reads, in one-letter code: MSKQTLVLLYGGRSAEREVSVLSAESVMRAVNYDKFLVKTYFITQMGQFIRTQQFSEKPSESERLMTNETIELTQKIKPSDIYEEGAVVFPVLHGPMGEDGSIQGFLEVLRMPYIGTNVMSSSIAMDKITTKRVLESIGIPQVAYTVYIDGQDLEACLVETLARLTFPIFVKPANMGSSVGISKAQTKVELRKAIQLALTYDSRVLIEQGVVAREIEVGLLGNDKVKSTLPGEVIKDVDFYDYQAKYVDNKITMAIPADVDQSIVTEMRSYAEVAFKALGGCGLSRCDFFLTQDGQVYLNELNTMPGFTQWSMYPLLWENMGLAYPDLIEELVTLAQEIFDQRESHLI.

The ATP-grasp domain maps to 132–334 (KRVLESIGIP…YPDLIEELVT (203 aa)). Position 162-217 (162-217 (LARLTFPIFVKPANMGSSVGISKAQTKVELRKAIQLALTYDSRVLIEQGVVAREIE)) interacts with ATP. The Mg(2+) site is built by D288, E301, and N303.

It belongs to the D-alanine--D-alanine ligase family. The cofactor is Mg(2+). Mn(2+) serves as cofactor.

The protein resides in the cytoplasm. The catalysed reaction is 2 D-alanine + ATP = D-alanyl-D-alanine + ADP + phosphate + H(+). It participates in cell wall biogenesis; peptidoglycan biosynthesis. Its function is as follows. Cell wall formation. This chain is D-alanine--D-alanine ligase, found in Streptococcus pyogenes serotype M6 (strain ATCC BAA-946 / MGAS10394).